A 242-amino-acid polypeptide reads, in one-letter code: tRNA (guanine-N(1)-)-methyltransferase (242 aa).

S-adenosyl-L-methionine contacts are provided by residues glycine 111 and 130–135; that span reads IGDYVL.

The protein belongs to the RNA methyltransferase TrmD family. Homodimer.

Its subcellular location is the cytoplasm. It catalyses the reaction guanosine(37) in tRNA + S-adenosyl-L-methionine = N(1)-methylguanosine(37) in tRNA + S-adenosyl-L-homocysteine + H(+). Its function is as follows. Specifically methylates guanosine-37 in various tRNAs. This chain is tRNA (guanine-N(1)-)-methyltransferase, found in Onion yellows phytoplasma (strain OY-M).